A 93-amino-acid chain; its full sequence is Small ribosomal subunit protein uS19 (93 aa).

The tract at residues 73-93 (EFSPTRTFRGHVKDDRKSKRR) is disordered. Over residues 83–93 (HVKDDRKSKRR) the composition is skewed to basic and acidic residues.

The protein belongs to the universal ribosomal protein uS19 family.

Functionally, protein S19 forms a complex with S13 that binds strongly to the 16S ribosomal RNA. The polypeptide is Small ribosomal subunit protein uS19 (Streptomyces avermitilis (strain ATCC 31267 / DSM 46492 / JCM 5070 / NBRC 14893 / NCIMB 12804 / NRRL 8165 / MA-4680)).